Here is a 285-residue protein sequence, read N- to C-terminus: Bifunctional protein FolD (285 aa).

NADP(+) contacts are provided by residues 165–167 (GRS) and Ser190.

It belongs to the tetrahydrofolate dehydrogenase/cyclohydrolase family. In terms of assembly, homodimer.

It catalyses the reaction (6R)-5,10-methylene-5,6,7,8-tetrahydrofolate + NADP(+) = (6R)-5,10-methenyltetrahydrofolate + NADPH. The enzyme catalyses (6R)-5,10-methenyltetrahydrofolate + H2O = (6R)-10-formyltetrahydrofolate + H(+). Its pathway is one-carbon metabolism; tetrahydrofolate interconversion. In terms of biological role, catalyzes the oxidation of 5,10-methylenetetrahydrofolate to 5,10-methenyltetrahydrofolate and then the hydrolysis of 5,10-methenyltetrahydrofolate to 10-formyltetrahydrofolate. The protein is Bifunctional protein FolD of Burkholderia orbicola (strain AU 1054).